Here is a 114-residue protein sequence, read N- to C-terminus: DNA-directed RNA polymerases II, IV and V subunit 9B (114 aa).

8 residues coordinate Zn(2+): C7, C10, C29, C32, C76, C79, C103, and C108. The TFIIS-type zinc finger occupies 72-113 (KAVRCAKCQHGEAVFFQATARGEEGMTLFFVCCNPNCSHRWR).

The protein belongs to the archaeal RpoM/eukaryotic RPA12/RPB9/RPC11 RNA polymerase family. In terms of assembly, component of the RNA polymerase II, IV and V complexes. Interacts with NRPD1.

It localises to the nucleus. The protein resides in the nucleolus. DNA-dependent RNA polymerase catalyzes the transcription of DNA into RNA using the four ribonucleoside triphosphates as substrates. Component of RNA polymerase II which synthesizes mRNA precursors and many functional non-coding RNAs. Pol II is the central component of the basal RNA polymerase II transcription machinery. It is composed of mobile elements that move relative to each other. Component of RNA polymerases IV and V which mediate short-interfering RNAs (siRNA) accumulation and subsequent RNA-directed DNA methylation-dependent (RdDM) transcriptional gene silencing (TGS) of endogenous repeated sequences, including transposable elements. Required for RNA silencing. This Arabidopsis thaliana (Mouse-ear cress) protein is DNA-directed RNA polymerases II, IV and V subunit 9B (NRPB9B).